We begin with the raw amino-acid sequence, 1017 residues long: MDKYRLTPHKITICVLVEYYLNGTIKYHQKQSLSHLLIRHIKENNYQDTVKEVSLYDFIEKELKYVLPIQFINNEFLRMIQFDSVDDIYQFMSSLKELFNGSNDHESINSKQMQLLDSKSILGIFIKKVILNFNQILFDGLIKLYDQLDQYLNDFYNEINKIQQQQQQQQQKEHCENDNSIDMSMDQEQQQQQQEDYNEISNYENKIKFLSPLDEERFIYEETIRINSLIGIETPLEIENQVNRLKASLPNVKRVHLISLLFNIGYQDYDQSLEDLHRYFDYVNGQMTSSQWSSSASSFLFTPNDNYQSGNSNSSNYYYNNYNFIGGSGDTTNLMLPYAVLNLVRLHYHFGHYEESYLALREAIRIAQERADHSCLALADHWLARLLKKSVYNSMESSNLLQYLLASHSDSEILKKSIERSRDLEMPDLLALNHTAFSKYKLENGEFSTNINSNNYNSNNNNNNNNSNTNNNTNNNNNTNNANNNNNNNNNNTNNTNNNNNNNNNNNNNNNNNNNNNNSSNSNNNGGVNMFGKSFHLWNDIFQPIEISRLLDKSSSTAMIAHHLYSSSWELLGNNDLAQFFTELAMKSYHSNDLSLQHDPLRAVSSQNTIIYNIGTNNNNNNNNNNNQIKQQQQQNQQPPDLLSFCKLALLYSKKSKYNEAIQILIKCFSIYKTQHLCGNLLTFTVLSILFDHLMINIDNNNNNNNNNNNNNNNNNNNNNNDNELLISIVIESLINITNRFQSEDSVDGSGWSQIVICYQKIIKYYCNVRGMYEKSMNLIVKGIQISRDFGLDSQITHFYSLLSKIYEKSSPYRFSGLSDTLSALSLSNSYHLANSIADSNIALIKIHLSTDRLDKAITLIKETLPMVLSDKLLNSQLYLLWAKSLISTSTKQSIDYLNRSEQLFLQLFSNQSNNNNNNNNNNNNNNELLKEIYYLKSIIYNDLGDIENRNLYAKKFKSILVPSSSIQQQQQQQQQQQQQQQQQQQQQQQSNQSPVINSVQPTPKICLVPPILMKIR.

5 TPR repeats span residues 30–63, 182–214, 252–286, 337–370, and 508–541; these read KQSL…EKEL, DMSM…SPLD, VKRV…VNGQ, PYAV…AQER, and NNNN…WNDI. A compositionally biased stretch (low complexity) spans 451–525; it reads INSNNYNSNN…NNNSSNSNNN (75 aa). Disordered stretches follow at residues 451-527 and 617-636; these read INSN…NNGG and NNNN…QQQN. TPR repeat units follow at residues 642–675, 756–790, 838–871, 876–908, and 931–964; these read LLSF…YKTQ, VICY…SRDF, ADSN…VLSD, SQLY…FLQL, and KEIY…LVPS.

It belongs to the APC5 family. In terms of assembly, the APC/C is composed of at least 13 subunits that stay tightly associated throughout the cell cycle: anapc1, anapc2, anapc3, anapc4, anapc5, anapc6, anapc7, anapc8, anapc10, anapc11, cdc20, cdc26 and cdh1.

It is found in the nucleus. The protein operates within protein modification; protein ubiquitination. Its function is as follows. Component of the anaphase promoting complex/cyclosome (APC/C), a cell cycle-regulated E3 ubiquitin-protein ligase complex that controls progression through mitosis and the G1 phase of the cell cycle. The chain is Anaphase-promoting complex subunit 5 (anapc5) from Dictyostelium discoideum (Social amoeba).